A 449-amino-acid polypeptide reads, in one-letter code: SWI/SNF chromatin-remodeling accessory subunit 2 (449 aa).

The segment covering 1-11 (MHSQQRPNPQM) has biased composition (polar residues). The segment at 1-56 (MHSQQRPNPQMNRHPYGTPGSAPQMRRPGGFAGQPPQMHGPRMVAPPAAPLPKKKK) is disordered. The 78-residue stretch at 223–300 (NHPAKFKLHP…PNKLHQLLQQ (78 aa)) folds into the SWIB/MDM2 domain.

This sequence belongs to the SMARCD family. In terms of assembly, component of the multiprotein chromatin-remodeling complexes SWI/SNF: SWI/SNF-A (BAF), SWI/SNF-B (PBAF) and related complexes. The canonical complex contains a catalytic subunit swsn-4, core subunits swsn-1 and swsn-5, and accessory subunits swsn-3, swsn-6, phf-10, dpff-1, swsn-9 and either ham-3/swsn-2.1 or swsn-2.2.

It localises to the nucleus. The protein localises to the nucleoplasm. It is found in the chromosome. Its subcellular location is the nucleus envelope. Its function is as follows. Involved in transcriptional activation and repression of select genes by chromatin remodeling (alteration of DNA-nucleosome topology). Component of SWI/SNF chromatin remodeling complexes that carry out key enzymatic activities, changing chromatin structure by altering DNA-histone contacts within a nucleosome in an ATP-dependent manner. Probably regulates vulva development through the let-60/Ras pathway. Involved in nuclear reassembly after mitosis and recruitment of nuclear envelope protein, mel-28, to the nuclear periphery in the early embryo and in the adult germline. Involved in gonadogenesis. In Caenorhabditis elegans, this protein is SWI/SNF chromatin-remodeling accessory subunit 2.